The following is a 574-amino-acid chain: Phenylalanine--tRNA ligase beta subunit (574 aa).

Residues 278–353 (LTPKEFEVEL…IAYGYNEIEP (76 aa)) form the B5 domain. Positions 331, 337, 340, and 341 each coordinate Mg(2+).

Belongs to the phenylalanyl-tRNA synthetase beta subunit family. Type 2 subfamily. As to quaternary structure, tetramer of two alpha and two beta subunits. Mg(2+) serves as cofactor.

Its subcellular location is the cytoplasm. The enzyme catalyses tRNA(Phe) + L-phenylalanine + ATP = L-phenylalanyl-tRNA(Phe) + AMP + diphosphate + H(+). This is Phenylalanine--tRNA ligase beta subunit from Thermococcus kodakarensis (strain ATCC BAA-918 / JCM 12380 / KOD1) (Pyrococcus kodakaraensis (strain KOD1)).